The chain runs to 72 residues: Long neurotoxin OH-17 (72 aa).

Intrachain disulfides connect cysteine 3–cysteine 21, cysteine 14–cysteine 42, cysteine 27–cysteine 31, cysteine 46–cysteine 57, and cysteine 58–cysteine 63.

The protein belongs to the three-finger toxin family. Long-chain subfamily. Type II alpha-neurotoxin sub-subfamily. In terms of tissue distribution, expressed by the venom gland.

The protein resides in the secreted. In terms of biological role, binds with high affinity to muscular (alpha-1/CHRNA1) and neuronal (alpha-7/CHRNA7) nicotinic acetylcholine receptor (nAChR) and inhibits acetylcholine from binding to the receptor, thereby impairing neuromuscular and neuronal transmission. This chain is Long neurotoxin OH-17, found in Ophiophagus hannah (King cobra).